A 63-amino-acid chain; its full sequence is Large ribosomal subunit protein uL29 (63 aa).

This sequence belongs to the universal ribosomal protein uL29 family.

The polypeptide is Large ribosomal subunit protein uL29 (Marinomonas sp. (strain MWYL1)).